Reading from the N-terminus, the 263-residue chain is Small ribosomal subunit protein uS2 (263 aa).

An N-acetylserine modification is found at serine 2. Acidic residues predominate over residues 211-242 (EQTAEEEAEAAEGAEFEVEEEEVEQEWQEPAE). Residues 211–263 (EQTAEEEAEAAEGAEFEVEEEEVEQEWQEPAEADWNASAPPADWNDAANAEAF) form a disordered region. Low complexity predominate over residues 246–263 (NASAPPADWNDAANAEAF).

This sequence belongs to the universal ribosomal protein uS2 family. In terms of assembly, component of the small ribosomal subunit. Mature ribosomes consist of a small (40S) and a large (60S) subunit. The 40S subunit contains about 33 different proteins and 1 molecule of RNA (18S). The 60S subunit contains about 49 different proteins and 3 molecules of RNA (25S, 5.8S and 5S). Interacts with RPS21.

Its subcellular location is the cytoplasm. Required for the assembly and/or stability of the 40S ribosomal subunit. Required for the processing of the 20S rRNA-precursor to mature 18S rRNA in a late step of the maturation of 40S ribosomal subunits. The chain is Small ribosomal subunit protein uS2 from Komagataella phaffii (strain GS115 / ATCC 20864) (Yeast).